The sequence spans 244 residues: Small ribosomal subunit protein eS4 (244 aa).

Positions 43–106 constitute an S4 RNA-binding domain; that stretch reads LPLLLVVRDI…DENYLVLFDE (64 aa).

The protein belongs to the eukaryotic ribosomal protein eS4 family.

The polypeptide is Small ribosomal subunit protein eS4 (Methanococcus maripaludis (strain C6 / ATCC BAA-1332)).